Reading from the N-terminus, the 71-residue chain is Large ribosomal subunit protein uL29 (71 aa).

Belongs to the universal ribosomal protein uL29 family.

The sequence is that of Large ribosomal subunit protein uL29 from Rickettsia typhi (strain ATCC VR-144 / Wilmington).